Here is a 690-residue protein sequence, read N- to C-terminus: Elongation factor G (690 aa).

The tr-type G domain occupies 8 to 283 (EDYRNFGIMA…AVVDFLPSPL (276 aa)). Residues 17-24 (AHIDAGKT), 81-85 (DTPGH), and 135-138 (NKMD) each bind GTP.

It belongs to the TRAFAC class translation factor GTPase superfamily. Classic translation factor GTPase family. EF-G/EF-2 subfamily.

It localises to the cytoplasm. Functionally, catalyzes the GTP-dependent ribosomal translocation step during translation elongation. During this step, the ribosome changes from the pre-translocational (PRE) to the post-translocational (POST) state as the newly formed A-site-bound peptidyl-tRNA and P-site-bound deacylated tRNA move to the P and E sites, respectively. Catalyzes the coordinated movement of the two tRNA molecules, the mRNA and conformational changes in the ribosome. This chain is Elongation factor G, found in Nitrobacter hamburgensis (strain DSM 10229 / NCIMB 13809 / X14).